Here is a 131-residue protein sequence, read N- to C-terminus: Aspartate 1-decarboxylase (131 aa).

S25 acts as the Schiff-base intermediate with substrate; via pyruvic acid in catalysis. Pyruvic acid (Ser) is present on S25. Residue T57 participates in substrate binding. Y58 functions as the Proton donor in the catalytic mechanism. 73–75 (GAA) contacts substrate.

It belongs to the PanD family. Heterooctamer of four alpha and four beta subunits. Pyruvate is required as a cofactor. Post-translationally, is synthesized initially as an inactive proenzyme, which is activated by self-cleavage at a specific serine bond to produce a beta-subunit with a hydroxyl group at its C-terminus and an alpha-subunit with a pyruvoyl group at its N-terminus.

The protein localises to the cytoplasm. It carries out the reaction L-aspartate + H(+) = beta-alanine + CO2. Its pathway is cofactor biosynthesis; (R)-pantothenate biosynthesis; beta-alanine from L-aspartate: step 1/1. Catalyzes the pyruvoyl-dependent decarboxylation of aspartate to produce beta-alanine. The protein is Aspartate 1-decarboxylase of Acaryochloris marina (strain MBIC 11017).